The primary structure comprises 288 residues: Phosphatidylglycerol--prolipoprotein diacylglyceryl transferase (288 aa).

The next 4 helical transmembrane spans lie at 18-38, 68-88, 107-127, and 135-155; these read WSLRLTWYGVFFTVGIFLACL, FFIYSILFIVPGARLAYVIFY, GLSSHGGVLGFLLWAAIFSWI, and LTFLFLTDLCGSVFGIAAFFI. R156 provides a ligand contact to a 1,2-diacyl-sn-glycero-3-phospho-(1'-sn-glycerol). 3 helical membrane-spanning segments follow: residues 193–213, 222–242, and 256–276; these read VQLYEGISYLVVSGILYFLSY, GYVTSIACISVAFIRFFAEYV, and LTIGQILSIPLFLFGVALLII.

This sequence belongs to the Lgt family.

The protein resides in the cell inner membrane. It catalyses the reaction L-cysteinyl-[prolipoprotein] + a 1,2-diacyl-sn-glycero-3-phospho-(1'-sn-glycerol) = an S-1,2-diacyl-sn-glyceryl-L-cysteinyl-[prolipoprotein] + sn-glycerol 1-phosphate + H(+). It functions in the pathway protein modification; lipoprotein biosynthesis (diacylglyceryl transfer). Its function is as follows. Catalyzes the transfer of the diacylglyceryl group from phosphatidylglycerol to the sulfhydryl group of the N-terminal cysteine of a prolipoprotein, the first step in the formation of mature lipoproteins. This is Phosphatidylglycerol--prolipoprotein diacylglyceryl transferase from Chlamydia pneumoniae (Chlamydophila pneumoniae).